A 297-amino-acid chain; its full sequence is PAK4-inhibitor INKA2 (297 aa).

3 disordered regions span residues 82–109 (GRGP…PSHR), 175–200 (LEKG…PQEL), and 234–285 (TPMV…LEHS). Low complexity predominate over residues 92 to 102 (SPSSQPSLGSS). The segment at 137–180 (EPDDWTSTLMSRGRNRQPLVLGDNVFADLVGNWLDLPELEKGGE) is inka box. Over residues 244–253 (RSQKVKKRSL) the composition is skewed to basic residues.

This sequence belongs to the INKA family. In terms of assembly, interacts with PAK4.

The protein localises to the nucleus. In terms of biological role, inhibitor of the serine/threonine-protein kinase PAK4. Acts by binding PAK4 in a substrate-like manner, inhibiting the protein kinase activity. This is PAK4-inhibitor INKA2 from Homo sapiens (Human).